Consider the following 362-residue polypeptide: Glutamate 5-kinase (362 aa).

Lys3 serves as a coordination point for ATP. Substrate-binding residues include Ser43, Asp128, and Asn140. Residues 160 to 161 (TD) and 202 to 208 (TGGMRTK) contribute to the ATP site. The 82-residue stretch at 267-348 (AGAILIDDGA…REIENVLGYS (82 aa)) folds into the PUA domain.

It belongs to the glutamate 5-kinase family.

It is found in the cytoplasm. The enzyme catalyses L-glutamate + ATP = L-glutamyl 5-phosphate + ADP. It functions in the pathway amino-acid biosynthesis; L-proline biosynthesis; L-glutamate 5-semialdehyde from L-glutamate: step 1/2. Its function is as follows. Catalyzes the transfer of a phosphate group to glutamate to form L-glutamate 5-phosphate. This Xanthomonas euvesicatoria pv. vesicatoria (strain 85-10) (Xanthomonas campestris pv. vesicatoria) protein is Glutamate 5-kinase.